We begin with the raw amino-acid sequence, 206 residues long: Ribosomal RNA small subunit methyltransferase G (206 aa).

Residues Gly71, Phe76, Ile125–Glu126, and Arg139 each bind S-adenosyl-L-methionine.

It belongs to the methyltransferase superfamily. RNA methyltransferase RsmG family.

Its subcellular location is the cytoplasm. The catalysed reaction is guanosine(527) in 16S rRNA + S-adenosyl-L-methionine = N(7)-methylguanosine(527) in 16S rRNA + S-adenosyl-L-homocysteine. Specifically methylates the N7 position of guanine in position 527 of 16S rRNA. This chain is Ribosomal RNA small subunit methyltransferase G, found in Cereibacter sphaeroides (strain ATCC 17023 / DSM 158 / JCM 6121 / CCUG 31486 / LMG 2827 / NBRC 12203 / NCIMB 8253 / ATH 2.4.1.) (Rhodobacter sphaeroides).